We begin with the raw amino-acid sequence, 562 residues long: Potassium-transporting ATPase potassium-binding subunit (562 aa).

The next 12 helical transmembrane spans lie at 6-26 (FLLIASFMVVLFVLSRPLGGF), 63-83 (ALAILCFNLLGIVLLFVLLMA), 132-152 (GLTVQNFLSAATGIAVAFALI), 175-195 (LYVLLPIALIIALIFVSQGVL), 253-273 (FVQMLAIFLIPCALCFAFGQV), 283-303 (LIWAMSLIFIVAVVVVMYAEL), 327-347 (FGILATSLYAVVTTAASCGAV), 356-376 (ALGGMIPLWLMQIGEVVFGGV), 379-399 (GLYGMLLFVLLTVFIAGLMIG), 416-436 (MTALAILVTPTIVLLGTALAL), 483-503 (LLLAAAMFIGRFGVILPVLAI), and 526-546 (LFIGLLIGTVLLVGALTFIPA).

This sequence belongs to the KdpA family. The system is composed of three essential subunits: KdpA, KdpB and KdpC.

It is found in the cell inner membrane. Functionally, part of the high-affinity ATP-driven potassium transport (or Kdp) system, which catalyzes the hydrolysis of ATP coupled with the electrogenic transport of potassium into the cytoplasm. This subunit binds the periplasmic potassium ions and delivers the ions to the membrane domain of KdpB through an intramembrane tunnel. This chain is Potassium-transporting ATPase potassium-binding subunit, found in Yersinia pseudotuberculosis serotype O:1b (strain IP 31758).